A 40-amino-acid polypeptide reads, in one-letter code: Photosystem II reaction center protein J (40 aa).

The helical transmembrane segment at isoleucine 8–phenylalanine 28 threads the bilayer.

This sequence belongs to the PsbJ family. In terms of assembly, PSII is composed of 1 copy each of membrane proteins PsbA, PsbB, PsbC, PsbD, PsbE, PsbF, PsbH, PsbI, PsbJ, PsbK, PsbL, PsbM, PsbT, PsbX, PsbY, PsbZ, Psb30/Ycf12, at least 3 peripheral proteins of the oxygen-evolving complex and a large number of cofactors. It forms dimeric complexes.

It is found in the plastid. Its subcellular location is the chloroplast thylakoid membrane. Functionally, one of the components of the core complex of photosystem II (PSII). PSII is a light-driven water:plastoquinone oxidoreductase that uses light energy to abstract electrons from H(2)O, generating O(2) and a proton gradient subsequently used for ATP formation. It consists of a core antenna complex that captures photons, and an electron transfer chain that converts photonic excitation into a charge separation. This is Photosystem II reaction center protein J from Phalaenopsis aphrodite subsp. formosana (Moth orchid).